The sequence spans 1170 residues: Probable mRNA-capping enzyme (1170 aa).

Lysine 292 acts as the N6-GMP-lysine intermediate in catalysis. The mRNA cap 0 methyltransferase domain occupies 684–1007 (SNAAGMRAFN…LNRYYVFRKT (324 aa)). 693–694 (NN) is an mRNA binding site. Residues lysine 697, glycine 715, aspartate 737, and 813 to 815 (QFT) contribute to the S-adenosyl-L-methionine site.

The protein in the N-terminal section; belongs to the dsDNA virus mRNA guanylyltransferase family. In the C-terminal section; belongs to the class I-like SAM-binding methyltransferase superfamily. mRNA cap 0 methyltransferase family.

It is found in the virion. It carries out the reaction a 5'-end triphospho-ribonucleoside in mRNA + H2O = a 5'-end diphospho-ribonucleoside in mRNA + phosphate + H(+). The enzyme catalyses a 5'-end diphospho-ribonucleoside in mRNA + GTP + H(+) = a 5'-end (5'-triphosphoguanosine)-ribonucleoside in mRNA + diphosphate. It catalyses the reaction a 5'-end (5'-triphosphoguanosine)-ribonucleoside in mRNA + S-adenosyl-L-methionine = a 5'-end (N(7)-methyl 5'-triphosphoguanosine)-ribonucleoside in mRNA + S-adenosyl-L-homocysteine. The protein operates within mRNA processing; mRNA capping. Its function is as follows. Responsible for methylating the 5'-cap structure of mRNAs. The protein is Probable mRNA-capping enzyme of Acanthamoeba polyphaga mimivirus (APMV).